The following is a 283-amino-acid chain: Putative Ig-like domain-containing protein ORF10 (283 aa).

Positions 1-55 (MIDKRNKKAVTHISTCLCHSSIPIYGDSPFLNTHRAAMDPRPLVLLLLLASHIST) are cleaved as a signal peptide. N-linked (GlcNAc...) asparagine; by host glycosylation is found at N75, N92, N121, N157, N179, N198, N223, and N229. Residues 129 to 227 (QPLGQSIHHA…IDQQTNLTLT (99 aa)) enclose the Ig-like domain.

In Galliformes (FAdV-1), this protein is Putative Ig-like domain-containing protein ORF10.